Consider the following 411-residue polypeptide: UDP-N-acetylmuramoylalanine--D-glutamate ligase (411 aa).

92–98 lines the ATP pocket; it reads GTDGKST.

This sequence belongs to the MurCDEF family.

It is found in the cytoplasm. The enzyme catalyses UDP-N-acetyl-alpha-D-muramoyl-L-alanine + D-glutamate + ATP = UDP-N-acetyl-alpha-D-muramoyl-L-alanyl-D-glutamate + ADP + phosphate + H(+). Its pathway is cell wall biogenesis; peptidoglycan biosynthesis. Its function is as follows. Cell wall formation. Catalyzes the addition of glutamate to the nucleotide precursor UDP-N-acetylmuramoyl-L-alanine (UMA). The protein is UDP-N-acetylmuramoylalanine--D-glutamate ligase of Hydrogenobaculum sp. (strain Y04AAS1).